The sequence spans 353 residues: uncharacterized protein (353 aa).

This is an uncharacterized protein from Archaeoglobus fulgidus (strain ATCC 49558 / DSM 4304 / JCM 9628 / NBRC 100126 / VC-16).